A 358-amino-acid polypeptide reads, in one-letter code: Protein RecA (358 aa).

67-74 (GPESSGKT) lines the ATP pocket.

It belongs to the RecA family.

The protein localises to the cytoplasm. Can catalyze the hydrolysis of ATP in the presence of single-stranded DNA, the ATP-dependent uptake of single-stranded DNA by duplex DNA, and the ATP-dependent hybridization of homologous single-stranded DNAs. It interacts with LexA causing its activation and leading to its autocatalytic cleavage. The sequence is that of Protein RecA from Xenorhabdus nematophila (strain ATCC 19061 / DSM 3370 / CCUG 14189 / LMG 1036 / NCIMB 9965 / AN6).